A 103-amino-acid chain; its full sequence is Small ribosomal subunit protein bS18 (103 aa).

The span at 1-19 (MSEERTERPERTERPERPQ) shows a compositional bias: basic and acidic residues. A disordered region spans residues 1 to 33 (MSEERTERPERTERPERPQQRGSGPRKRRPFQR). Residues 24–33 (GPRKRRPFQR) show a composition bias toward basic residues.

This sequence belongs to the bacterial ribosomal protein bS18 family. As to quaternary structure, part of the 30S ribosomal subunit. Forms a tight heterodimer with protein bS6.

Its function is as follows. Binds as a heterodimer with protein bS6 to the central domain of the 16S rRNA, where it helps stabilize the platform of the 30S subunit. The polypeptide is Small ribosomal subunit protein bS18 (Geobacter sulfurreducens (strain ATCC 51573 / DSM 12127 / PCA)).